A 450-amino-acid polypeptide reads, in one-letter code: uncharacterized protein (450 aa).

A TRAM domain is found at 1–58 (MAKGEIVTVKIEEMDFKGYGVGYCEGKPLKVRGGILGQRVAVRVKKGKKGRAEGEIVE). Residues C71, C77, C80, and C159 each contribute to the [4Fe-4S] cluster site. The S-adenosyl-L-methionine site is built by Q285, Y314, E335, and D380. The active-site Nucleophile is the C407.

It belongs to the class I-like SAM-binding methyltransferase superfamily. RNA M5U methyltransferase family.

This is an uncharacterized protein from Caldanaerobacter subterraneus subsp. tengcongensis (strain DSM 15242 / JCM 11007 / NBRC 100824 / MB4) (Thermoanaerobacter tengcongensis).